The following is a 339-amino-acid chain: Anthranilate phosphoribosyltransferase (339 aa).

Residues G79, G82 to D83, T87, N89 to T92, K107 to S115, and S119 contribute to the 5-phospho-alpha-D-ribose 1-diphosphate site. G79 contacts anthranilate. S91 contributes to the Mg(2+) binding site. N110 lines the anthranilate pocket. Residue R165 coordinates anthranilate. D224 and E225 together coordinate Mg(2+).

This sequence belongs to the anthranilate phosphoribosyltransferase family. Homodimer. Mg(2+) is required as a cofactor.

The enzyme catalyses N-(5-phospho-beta-D-ribosyl)anthranilate + diphosphate = 5-phospho-alpha-D-ribose 1-diphosphate + anthranilate. The protein operates within amino-acid biosynthesis; L-tryptophan biosynthesis; L-tryptophan from chorismate: step 2/5. Catalyzes the transfer of the phosphoribosyl group of 5-phosphorylribose-1-pyrophosphate (PRPP) to anthranilate to yield N-(5'-phosphoribosyl)-anthranilate (PRA). In Geobacillus sp. (strain WCH70), this protein is Anthranilate phosphoribosyltransferase.